Here is a 107-residue protein sequence, read N- to C-terminus: Iron-sulfur cluster assembly protein CyaY (107 aa).

The protein belongs to the frataxin family.

In terms of biological role, involved in iron-sulfur (Fe-S) cluster assembly. May act as a regulator of Fe-S biogenesis. This chain is Iron-sulfur cluster assembly protein CyaY, found in Neisseria meningitidis serogroup C / serotype 2a (strain ATCC 700532 / DSM 15464 / FAM18).